The sequence spans 23 residues: Magainin-R1 (23 aa).

Expressed by the skin glands.

It is found in the secreted. Its function is as follows. Antimicrobial peptide. The polypeptide is Magainin-R1 (Xenopus ruwenzoriensis (Uganda clawed frog)).